We begin with the raw amino-acid sequence, 62 residues long: Endoregulin (62 aa).

The helical transmembrane segment at 25–45 (LAVIILFITAVLLLILFAIVF) threads the bilayer.

Homooligomer. Can also form heterooligomers with other sarcoplasmic/endoplasmic reticulum calcium ATPase (SERCA) regulators ARLN, PLN, SLN and STRIT1/DWORF. Monomer. Interacts as a monomer with ATP2A2/SERCA2; the interaction results in inhibition of ATP2A2 Ca(2+) affinity.

It localises to the endoplasmic reticulum membrane. In terms of biological role, inhibits the activity of the calcium ATPases ATP2A2/SERCA2 and ATP2A3/SERCA3 by decreasing their apparent affinity for Ca(2+). In Homo sapiens (Human), this protein is Endoregulin.